A 498-amino-acid polypeptide reads, in one-letter code: Cysteine--tRNA ligase (498 aa).

Cys-44 lines the Zn(2+) pocket. The short motif at 46–56 (PTVYSDAHLGH) is the 'HIGH' region element. Zn(2+)-binding residues include Cys-235, His-260, and Glu-264. The short motif at 291–295 (KMSKS) is the 'KMSKS' region element. Lys-294 serves as a coordination point for ATP.

This sequence belongs to the class-I aminoacyl-tRNA synthetase family. In terms of assembly, monomer. It depends on Zn(2+) as a cofactor.

The protein resides in the cytoplasm. It catalyses the reaction tRNA(Cys) + L-cysteine + ATP = L-cysteinyl-tRNA(Cys) + AMP + diphosphate. The sequence is that of Cysteine--tRNA ligase (cysS) from Deinococcus radiodurans (strain ATCC 13939 / DSM 20539 / JCM 16871 / CCUG 27074 / LMG 4051 / NBRC 15346 / NCIMB 9279 / VKM B-1422 / R1).